The sequence spans 182 residues: MGLPPLSKIPLILRPQAWLHRRHYGEVLSPIRWWGRIPFIFYLVSMFVGWLERKRSPLDPVVRSLVSARIAQMCLCEFCVDITSMKVAERTGSSDKLLAVADWRQSPLFSDEERLALEYAEAASVTPPTVDDALRTRLAAHFDAQALTELTALIGLQNLSARFNSAMDIPAQGLCRIPEKRS.

To M.tuberculosis Rv2313c.

This is an uncharacterized protein from Escherichia coli (strain K12).